Here is a 1029-residue protein sequence, read N- to C-terminus: Tyrosine-protein kinase-like otk (1029 aa).

Positions methionine 1 to alanine 18 are cleaved as a signal peptide. At serine 19–alanine 577 the chain is on the extracellular side. Ig-like C2-type domains lie at serine 21–serine 104, proline 105–serine 195, proline 247–serine 361, proline 364–asparagine 459, and proline 464–valine 554. An N-linked (GlcNAc...) asparagine glycan is attached at asparagine 35. Intrachain disulfides connect cysteine 42/cysteine 91, cysteine 133/cysteine 184, cysteine 272/cysteine 350, and cysteine 395/cysteine 443. Residues asparagine 332, asparagine 413, asparagine 425, asparagine 440, asparagine 453, asparagine 508, and asparagine 520 are each glycosylated (N-linked (GlcNAc...) asparagine). An intrachain disulfide couples cysteine 486 to cysteine 538. The helical transmembrane segment at valine 578–tryptophan 598 threads the bilayer. Over cysteine 599–lysine 1029 the chain is Cytoplasmic. Disordered regions lie at residues leucine 613 to alanine 675 and serine 714 to methionine 756. The segment covering lysine 651 to arginine 669 has biased composition (polar residues). A Phosphoserine modification is found at serine 674. The region spanning leucine 688 to methionine 1024 is the Protein kinase; inactive domain. Residues serine 716 to serine 727 show a composition bias toward basic and acidic residues.

This sequence belongs to the protein kinase superfamily. Tyr protein kinase family. Insulin receptor subfamily. In terms of assembly, interacts with plexA; component of a receptor complex that mediates the repulsive signaling in response to Semaphorin ligands.

The protein resides in the cell membrane. In terms of biological role, acts as a calcium-dependent, homophilic cell adhesion molecule that regulates neural recognition during the development of the nervous system. Component of the repulsive Plexin signaling response to regulate motor axon guidance at the embryonic stage. Also component of a receptor complex that is required in the adult visual system to innervate the lamina layer; specific targeting of R1-R6 axons. The chain is Tyrosine-protein kinase-like otk from Drosophila sechellia (Fruit fly).